Reading from the N-terminus, the 192-residue chain is UPF0462 protein C4orf33 homolog (192 aa).

This sequence belongs to the UPF0462 family.

This chain is UPF0462 protein C4orf33 homolog (D3Ertd751e), found in Mus musculus (Mouse).